A 172-amino-acid polypeptide reads, in one-letter code: Putative defense protein (172 aa).

Positions 1-21 (MKLVVAAVLAMAASRWRRLSA) are cleaved as a signal peptide. Residues 22-172 (HGQVPSSTCA…LRQLDNAVAA (151 aa)) form the Reelin domain.

The protein belongs to the insect defense protein family. In terms of tissue distribution, in adults, in hemolymph.

The protein localises to the secreted. In terms of biological role, may have antimicrobial activity. The polypeptide is Putative defense protein (Locusta migratoria (Migratory locust)).